The primary structure comprises 172 residues: Fimbrial-like protein FimF (172 aa).

Positions M1–A21 are cleaved as a signal peptide. Cysteines 41 and 81 form a disulfide.

The protein belongs to the fimbrial protein family.

Its subcellular location is the fimbrium. In Salmonella typhimurium (strain LT2 / SGSC1412 / ATCC 700720), this protein is Fimbrial-like protein FimF (fimF).